The sequence spans 843 residues: uncharacterized protein (843 aa).

A DNA-binding region (zn(2)-C6 fungal-type) is located at residues 15 to 42 (CLRCKQRKIKCDKLWPTCSKCKASSSIC).

The protein localises to the nucleus. Functionally, required for growth on non-fermentable carbon sources. This is an uncharacterized protein from Saccharomyces cerevisiae (strain ATCC 204508 / S288c) (Baker's yeast).